A 98-amino-acid polypeptide reads, in one-letter code: Large ribosomal subunit protein uL23 (98 aa).

This sequence belongs to the universal ribosomal protein uL23 family. As to quaternary structure, part of the 50S ribosomal subunit. Contacts protein L29, and trigger factor when it is bound to the ribosome.

One of the early assembly proteins it binds 23S rRNA. One of the proteins that surrounds the polypeptide exit tunnel on the outside of the ribosome. Forms the main docking site for trigger factor binding to the ribosome. The protein is Large ribosomal subunit protein uL23 of Koribacter versatilis (strain Ellin345).